A 122-amino-acid chain; its full sequence is Large ribosomal subunit protein uL14 (122 aa).

Belongs to the universal ribosomal protein uL14 family. Part of the 50S ribosomal subunit. Forms a cluster with proteins L3 and L19. In the 70S ribosome, L14 and L19 interact and together make contacts with the 16S rRNA in bridges B5 and B8.

Its function is as follows. Binds to 23S rRNA. Forms part of two intersubunit bridges in the 70S ribosome. This chain is Large ribosomal subunit protein uL14, found in Spiroplasma citri.